The chain runs to 341 residues: UDP-3-O-(3-hydroxymyristoyl)glucosamine N-acyltransferase (341 aa).

Histidine 239 acts as the Proton acceptor in catalysis.

The protein belongs to the transferase hexapeptide repeat family. LpxD subfamily. In terms of assembly, homotrimer.

It catalyses the reaction a UDP-3-O-[(3R)-3-hydroxyacyl]-alpha-D-glucosamine + a (3R)-hydroxyacyl-[ACP] = a UDP-2-N,3-O-bis[(3R)-3-hydroxyacyl]-alpha-D-glucosamine + holo-[ACP] + H(+). The enzyme catalyses UDP-3-O-[(3R)-3-hydroxytetradecanoyl]-alpha-D-glucosamine + (3R)-hydroxytetradecanoyl-[ACP] = UDP-2-N,3-O-bis[(3R)-3-hydroxytetradecanoyl]-alpha-D-glucosamine + holo-[ACP] + H(+). It functions in the pathway glycolipid biosynthesis; lipid IV(A) biosynthesis; lipid IV(A) from (3R)-3-hydroxytetradecanoyl-[acyl-carrier-protein] and UDP-N-acetyl-alpha-D-glucosamine: step 3/6. Catalyzes the N-acylation of UDP-3-O-(hydroxytetradecanoyl)glucosamine using 3-hydroxytetradecanoyl-ACP as the acyl donor. Is involved in the biosynthesis of lipid A, a phosphorylated glycolipid that anchors the lipopolysaccharide to the outer membrane of the cell. The polypeptide is UDP-3-O-(3-hydroxymyristoyl)glucosamine N-acyltransferase (Shigella dysenteriae serotype 1 (strain Sd197)).